We begin with the raw amino-acid sequence, 751 residues long: Cytosolic neutral trehalase (751 aa).

A compositionally biased stretch (polar residues) spans 1-10 (MSQVNTSQGP). The interval 1–59 (MSQVNTSQGPVAQGRQRRLSSLSEFNDPFSNAEVYYGPPTDPRKQKQAKPAKINRTRTM) is disordered. Ser2 is modified (N-acetylserine). Phosphoserine; by PKA occurs at positions 20 and 21. Residue Ser23 is modified to Phosphoserine. The span at 45 to 55 (QKQAKPAKINR) shows a compositional bias: basic residues. Thr58 is modified (phosphothreonine). Ser60 is modified (phosphoserine; by PKA). At Ser66 the chain carries Phosphoserine. The segment at 73-92 (FGKLQQTRRGSEDDTYSSSQ) is disordered. Position 83 is a phosphoserine; by PKA (Ser83). Ca(2+)-binding residues include Asp114, Asp116, Asn118, Gln120, and Asp125. Substrate contacts are provided by residues Arg302, 309 to 310 (WD), Asn346, 355 to 357 (RSQ), Glu424, Arg473, and Gly476. Catalysis depends on proton donor/acceptor residues Asp478 and Glu674.

It belongs to the glycosyl hydrolase 37 family. Monomer. Interacts with BMH1 dimers; the interaction is direct and activates NTH1. Interacts with BMH2. It depends on Ca(2+) as a cofactor. Post-translationally, phosphorylated by protein kinase A (PKA); phosphorylation at Ser-60 and Ser-83 is required for activation by the 14-3-3 proteins BMH1 and BMH2.

Its subcellular location is the cytoplasm. The catalysed reaction is alpha,alpha-trehalose + H2O = alpha-D-glucose + beta-D-glucose. It functions in the pathway carbohydrate degradation. Its activity is regulated as follows. Activated by calcium. Activated by protein kinase A (PKA)-mediated phosphorylation. Functionally, hydrolyzes intracellular trehalose to glucose. The disaccharide trehalose serves as a storage carbohydrate that is mobilized during nutrient stress. Regulates the level of trehalose as a protectant for cell integrity during heat stress. The sequence is that of Cytosolic neutral trehalase from Saccharomyces cerevisiae (strain ATCC 204508 / S288c) (Baker's yeast).